The following is a 314-amino-acid chain: Olfactory receptor 5G3 (314 aa).

At 1–24 the chain is on the extracellular side; it reads MEDKNQTVVTEFLLLGLTDHPYQK. Residue Asn-5 is glycosylated (N-linked (GlcNAc...) asparagine). The chain crosses the membrane as a helical span at residues 25–45; that stretch reads IVLFFMFLFVYLITLGGNLGM. Over 46-97 the chain is Cytoplasmic; that stretch reads ITLIWIDPRLHTPMYFFLRHLSFVDICSSSSVVPKMLCNIFAEKKDITFLGC. Cys-97 and Cys-179 form a disulfide bridge. A helical transmembrane segment spans residues 98-118; sequence AAQMWFFGLFEAAECFLLAAM. At 119 to 143 the chain is on the extracellular side; the sequence is AYDRYVAICKPLLYTLIMSQQVCMQ. Residues 144–164 form a helical membrane-spanning segment; that stretch reads LVVGPYAMALISTMTHTIFTF. At 165 to 167 the chain is on the cytoplasmic side; sequence CLP. A helical membrane pass occupies residues 168 to 188; that stretch reads FCGSNIINHFFCDIFPLLSLA. Over 189-196 the chain is Extracellular; that stretch reads CADTWVNK. A helical membrane pass occupies residues 197–217; it reads FVLFVLAGAIGVLSGLIIMVS. At 218-237 the chain is on the cytoplasmic side; it reads YICILMTILKIQTADGKQKA. A helical transmembrane segment spans residues 238–258; that stretch reads FFTCFSHLAAVSILYGTLFLI. The Extracellular portion of the chain corresponds to 259–268; sequence YVRPSSSSSL. A helical transmembrane segment spans residues 269 to 289; the sequence is GIYKVISLFYTVVIPMVNPLI. Topologically, residues 290-314 are cytoplasmic; that stretch reads YSLRNKEVKDAFRRKIERKKFIIGR.

Belongs to the G-protein coupled receptor 1 family.

Its subcellular location is the cell membrane. Functionally, odorant receptor. This is Olfactory receptor 5G3 (OR5G3) from Homo sapiens (Human).